The following is a 79-amino-acid chain: Small ribosomal subunit protein uS17 (79 aa).

It belongs to the universal ribosomal protein uS17 family. Part of the 30S ribosomal subunit.

Its function is as follows. One of the primary rRNA binding proteins, it binds specifically to the 5'-end of 16S ribosomal RNA. The polypeptide is Small ribosomal subunit protein uS17 (Rhizobium rhizogenes (strain K84 / ATCC BAA-868) (Agrobacterium radiobacter)).